Consider the following 89-residue polypeptide: Small ribosomal subunit protein uS15 (89 aa).

Belongs to the universal ribosomal protein uS15 family. In terms of assembly, part of the 30S ribosomal subunit. Forms a bridge to the 50S subunit in the 70S ribosome, contacting the 23S rRNA.

In terms of biological role, one of the primary rRNA binding proteins, it binds directly to 16S rRNA where it helps nucleate assembly of the platform of the 30S subunit by binding and bridging several RNA helices of the 16S rRNA. Its function is as follows. Forms an intersubunit bridge (bridge B4) with the 23S rRNA of the 50S subunit in the ribosome. The sequence is that of Small ribosomal subunit protein uS15 from Streptococcus mutans serotype c (strain ATCC 700610 / UA159).